A 532-amino-acid polypeptide reads, in one-letter code: Nectin-4 (532 aa).

The first 30 residues, 1–30 (MGPLHGALLPPISVTVSLLILLLCAPGGRC), serve as a signal peptide directing secretion. The region spanning 31-142 (GVVHTEKSMT…GNFDAELELK (112 aa)) is the Ig-like V-type domain. Residues 31-344 (GVVHTEKSMT…TKIDLVSVSL (314 aa)) lie on the Extracellular side of the membrane. 3 cysteine pairs are disulfide-bonded: Cys51-Cys125, Cys169-Cys221, and Cys266-Cys312. Ig-like C2-type domains lie at 146–235 (PPLP…KRIT) and 244–328 (AEVS…AIVS). Residues 152-179 (GPGPPLTEGEGKSLAASCTAEGNPAPTL) are disordered. Residues Asn189 and Asn282 are each glycosylated (N-linked (GlcNAc...) asparagine). A helical transmembrane segment spans residues 345–365 (GSVGILTAVLLVVLVITLLLV). Residues 366–532 (NRHHKRQTKQ…IYINGRGHLV (167 aa)) lie on the Cytoplasmic side of the membrane. A disordered region spans residues 453–491 (QTELLSTVPDEEVKEDGEEPEQVEQSLEKEPNPTEPDGM). Positions 461–474 (PDEEVKEDGEEPEQ) are enriched in acidic residues.

The protein belongs to the nectin family.

Its subcellular location is the cell membrane. May be involved in cell adhesion. This chain is Nectin-4, found in Xenopus tropicalis (Western clawed frog).